We begin with the raw amino-acid sequence, 360 residues long: C-C chemokine receptor type 2 (360 aa).

At 1 to 42 the chain is on the extracellular side; the sequence is MLSTSRSRFIRNTNGSGEEVTTFFDYDYGAPCHKFDVKQIGA. The N-linked (GlcNAc...) asparagine glycan is linked to Asn-14. Tyr-26 is subject to Sulfotyrosine. Residues 43–70 traverse the membrane as a helical segment; that stretch reads QLLPPLYSLVFIFGFVGNMLVVLILINC. The Cytoplasmic portion of the chain corresponds to 71–80; that stretch reads KKLKSLTDIY. Residues 81–100 traverse the membrane as a helical segment; the sequence is LLNLAISDLLFLITLPLWAH. At 101-114 the chain is on the extracellular side; the sequence is SAANEWVFGNAMCK. A disulfide bridge links Cys-113 with Cys-190. Residues 115-136 traverse the membrane as a helical segment; it reads LFTGLYHIGYLGGIFFIILLTI. Residues 137-153 are Cytoplasmic-facing; it reads DRYLAIVHAVFALKART. The residue at position 139 (Tyr-139) is a Phosphotyrosine; by JAK2. A helical transmembrane segment spans residues 154–178; that stretch reads VTFGVVTSVITWLVAVFASVPGIIF. Residues 179 to 206 are Extracellular-facing; that stretch reads TKCQEEDSVYICGPYFPRGWNNFHTIMR. Residues 207-226 form a helical membrane-spanning segment; that stretch reads NILGLVLPLLIMVICYSGIL. Residues 227-243 are Cytoplasmic-facing; that stretch reads KTLLRCRNEKKRHRAVR. The helical transmembrane segment at 244-268 threads the bilayer; that stretch reads LIFTIMIVYFLFWTPYNIVILLNTF. Residues 269–285 are Extracellular-facing; sequence QEFFGLSNCESTRQLDQ. Residues 286-309 form a helical membrane-spanning segment; that stretch reads ATQVTETLGMTHCCINPIIYAFVG. The Cytoplasmic portion of the chain corresponds to 310–360; sequence EKFRRYLSMFFRKYITKRFCKQCPVFYRETVDGVTSTNTPSTAEQEVSVGL.

This sequence belongs to the G-protein coupled receptor 1 family. As to quaternary structure, interacts with ARRB1. Interacts (via extracellular N-terminal region) with beta-defensin DEFB106A/DEFB106B; this interaction may preferentially require specific tyrosine sulfation on CCR2. Interacts with NUP85; the interaction is required for CCR2 clusters formation on the cell membrane and CCR2 signaling. Post-translationally, N-glycosylated. Sulfation increases the affinity for both monomeric and dimeric CCL2 with stronger binding to the monomeric form. Binding of sulfated CCR2 to CCL2 promotes conversion of CCL2 from dimer to monomer.

The protein localises to the cell membrane. Its function is as follows. Key functional receptor for CCL2 but can also bind CCL7 and CCL12. Its binding with CCL2 on monocytes and macrophages mediates chemotaxis and migration induction through the activation of the PI3K cascade, the small G protein Rac and lamellipodium protrusion. Also acts as a receptor for the beta-defensin DEFB106A/DEFB106B. Regulates the expression of T-cell inflammatory cytokines and T-cell differentiation, promoting the differentiation of T-cells into T-helper 17 cells (Th17) during inflammation. Facilitates the export of mature thymocytes by enhancing directional movement of thymocytes to sphingosine-1-phosphate stimulation and up-regulation of S1P1R expression; signals through the JAK-STAT pathway to regulate FOXO1 activity leading to an increased expression of S1P1R. Plays an important role in mediating peripheral nerve injury-induced neuropathic pain. Increases NMDA-mediated synaptic transmission in both dopamine D1 and D2 receptor-containing neurons, which may be caused by MAPK/ERK-dependent phosphorylation of GRIN2B/NMDAR2B. Mediates the recruitment of macrophages and monocytes to the injury site following brain injury. The chain is C-C chemokine receptor type 2 (CCR2) from Macaca mulatta (Rhesus macaque).